The sequence spans 266 residues: Signal peptidase I (266 aa).

The Cytoplasmic portion of the chain corresponds to 1-20; that stretch reads MQTDNTKSNTNKTAKQEWWS. The chain crosses the membrane as a helical span at residues 21–41; it reads CAFVICIALLIRILIMEPFTV. The Periplasmic segment spans residues 42–266; it reads PTGSMKATIL…IFRNLYNTDE (225 aa). Catalysis depends on residues serine 45 and lysine 108.

The protein belongs to the peptidase S26 family.

The protein resides in the cell inner membrane. The catalysed reaction is Cleavage of hydrophobic, N-terminal signal or leader sequences from secreted and periplasmic proteins.. The sequence is that of Signal peptidase I (lepB) from Rickettsia akari (strain Hartford).